Here is a 148-residue protein sequence, read N- to C-terminus: UPF0208 membrane protein HD_1715 (148 aa).

Transmembrane regions (helical) follow at residues 41-60 (AARFMPIFACFAILWQYFFT) and 66-88 (ILANAIITSLFAISLPYQGLYWL).

Belongs to the UPF0208 family.

The protein resides in the cell inner membrane. This is UPF0208 membrane protein HD_1715 from Haemophilus ducreyi (strain 35000HP / ATCC 700724).